A 979-amino-acid polypeptide reads, in one-letter code: MDSDEIMPDEEHPNVPVGDEESDIDEKYPNRPRNHSPTLPFHELFQTLFNPLGEIKKKPAGAVAARRKVGPHGQSAANLNPLERRRDVIERFISRWRKEVGDDIYPAFRLILPDKDRDRAMYGIKEKAIGKMLVKIMKIDKNSEDGFNLLNWKLPGQAATSRMTGDFAGRCFDVISKRPMRTDVGDMLIEEVNEKLDKLSAASKEEQQLPILAEFYRRMNPEELMWLIRIILRQMKVGATERTFFDVWHPDAENLYSISSSLRRVCWELHDPNIRLDAEDRGISLMQCFQPQLAQFQMDSLDRMVARMRPTEEDPVFWIEEKLDGERMQLHMASDDSVPGGRRFRFWSRKAKEYTYLYGNGIYDENGSLTRYLKDAFADGVQSLILDGEMITWDPEQDAPAPFGTLKTAALSEQRNPFSTTGARPLLRVFDILYLNGRDLTGYTLRDRRKALQKAVRPVHRRFEIHPYEEATTKDQVEAALRKVVAEASEGLVLKNPRSPYRLNERHDDWMKVKPEYMTEFGESLDLIVIGGYYGSGRRGGNLSSFLCGLRVDDGHASQGASASKCYSFCKVGGGFNAADYANIRHHTDGKWMEWNPKKPPTAYIELAGRDAQYERPDMWIKPEDSVVICVKAASVSASDQFRLGLTLRFPRFKRLRMDKDWKSALSVQEFLDLKSNVEQEHREKELNVDNSRRKRVKRTAKKPLTVAGYDMDEDVKYAGPSGHIFDGLNFYILTDSSAPIKKTKPELEQLVKANGGMFFQTNNAAPHTICVADRRTVKAASLQKRGDVDIIRPSWIIDCVKQNEIDAGLPDFLLPFEPRHMFFATPGKHDEVASNVDQFGDSYARDTTSEELSDCPESITKLIERLQESVNSGHEMPCGLLFKSLTILFPHRNDDVSESEAKTSSHPSITHVVIDPESSSKEISSLRGKWSRKPGRKVPHIVTVDWVEESWKSRTLLDEERFQPKRCISGIAKPYWPG.

A disordered region spans residues 1-39 (MDSDEIMPDEEHPNVPVGDEESDIDEKYPNRPRNHSPTL). Glu320, Lys322, Leu323, Arg327, Glu389, Phe430, Glu490, Lys495, Lys512, and Lys514 together coordinate ATP. Residue Lys322 is the N6-AMP-lysine intermediate of the active site. Position 389 (Glu389) interacts with Mg(2+). Glu490 serves as a coordination point for Mg(2+). BRCT domains are found at residues 721–814 (PSGH…PDFL) and 867–965 (LQES…RFQP).

The protein belongs to the ATP-dependent DNA ligase family. Mg(2+) serves as cofactor.

The protein resides in the nucleus. It catalyses the reaction ATP + (deoxyribonucleotide)n-3'-hydroxyl + 5'-phospho-(deoxyribonucleotide)m = (deoxyribonucleotide)n+m + AMP + diphosphate.. In terms of biological role, DNA ligase involved in DNA non-homologous end joining (NHEJ); required for double-strand break (DSB) repair. This chain is DNA ligase 4 (lig4), found in Aspergillus fumigatus (strain ATCC MYA-4609 / CBS 101355 / FGSC A1100 / Af293) (Neosartorya fumigata).